A 132-amino-acid polypeptide reads, in one-letter code: MKVVYFSFSGNVRRFIKRSEISDVMEITKDNCTDPFEEPYILVTGTIGFGEVPKEVQSFLEINHHNLRAVAASGNRNWGQNFAKAGRTISEEYHVPLLMKFEVQGSNKDVIEFKNKVGHFNENYEREKVQSY.

This sequence belongs to the NrdI family.

Functionally, probably involved in ribonucleotide reductase function. This chain is Protein NrdI, found in Staphylococcus haemolyticus (strain JCSC1435).